Here is a 573-residue protein sequence, read N- to C-terminus: 60 kDa heat shock protein, mitochondrial (573 aa).

The N-terminal 26 residues, 1-26, are a transit peptide targeting the mitochondrion; it reads MLRLPTVLRQMRPVSRALAPHLTRAY. The residue at position 31 (Lys31) is an N6-succinyllysine. Ser67 and Ser70 each carry phosphoserine. Lys75 provides a ligand contact to ATP. N6-acetyllysine is present on Lys75. N6-acetyllysine; alternate is present on Lys82. Lys82 carries the post-translational modification N6-succinyllysine; alternate. Position 87 is an N6-acetyllysine (Lys87). Tyr90 carries the phosphotyrosine modification. An N6-acetyllysine modification is found at Lys91. 111–115 provides a ligand contact to ATP; that stretch reads DGTTT. Position 125 is an N6-acetyllysine; alternate (Lys125). At Lys125 the chain carries N6-succinyllysine; alternate. Lys130 is subject to N6-acetyllysine. Lys133 carries the post-translational modification N6-acetyllysine; alternate. N6-succinyllysine; alternate is present on Lys133. At Lys133 the chain carries N6-malonyllysine; alternate. At Lys156 the chain carries N6-acetyllysine. Lys191, Lys202, Lys205, Lys218, and Lys236 each carry N6-acetyllysine; alternate. Lys191, Lys202, Lys205, Lys218, and Lys236 each carry N6-succinyllysine; alternate. Lys249 is subject to N6-acetyllysine. Lys250 carries the N6-acetyllysine; alternate modification. Position 250 is an N6-succinyllysine; alternate (Lys250). 2 positions are modified to N6-acetyllysine: Lys269 and Lys292. Lys301 carries the post-translational modification N6-succinyllysine. Lys314 is subject to N6-acetyllysine. The residue at position 352 (Lys352) is an N6-acetyllysine; alternate. Lys352 is modified (N6-succinyllysine; alternate). N6-acetyllysine occurs at positions 359 and 389. Residue Lys396 is modified to N6-acetyllysine; alternate. An N6-succinyllysine; alternate modification is found at Lys396. Ser410 is modified (phosphoserine). Gly440 contributes to the ATP binding site. At Lys455 the chain carries N6-acetyllysine; alternate. Lys455 bears the N6-succinyllysine; alternate mark. Lys469 is subject to N6-acetyllysine. Lys481 carries the N6-acetyllysine; alternate modification. Lys481 is subject to N6-succinyllysine; alternate. Residue Ser488 is modified to Phosphoserine. Asp520 lines the ATP pocket. A Glycyl lysine isopeptide (Lys-Gly) (interchain with G-Cter in SUMO2) cross-link involves residue Lys551.

This sequence belongs to the chaperonin (HSP60) family. As to quaternary structure, homoheptamer arranged in a ring structure. The functional units of these chaperonins consist of heptameric rings of the large subunit Hsp60, which function as a back-to-back double ring. Interacts with 2 heptameric Hsp10 rings to form the symmetrical football complex. Interacts with HRAS. Interacts with ATAD3A. Interacts with ETFBKMT and EEF1AKMT3. Interacts with MFHAS1.

The protein resides in the mitochondrion matrix. It catalyses the reaction ATP + H2O + a folded polypeptide = ADP + phosphate + an unfolded polypeptide.. In terms of biological role, chaperonin implicated in mitochondrial protein import and macromolecular assembly. Together with Hsp10, facilitates the correct folding of imported proteins. May also prevent misfolding and promote the refolding and proper assembly of unfolded polypeptides generated under stress conditions in the mitochondrial matrix. The functional units of these chaperonins consist of heptameric rings of the large subunit Hsp60, which function as a back-to-back double ring. In a cyclic reaction, Hsp60 ring complexes bind one unfolded substrate protein per ring, followed by the binding of ATP and association with 2 heptameric rings of the co-chaperonin Hsp10. This leads to sequestration of the substrate protein in the inner cavity of Hsp60 where, for a certain period of time, it can fold undisturbed by other cell components. Synchronous hydrolysis of ATP in all Hsp60 subunits results in the dissociation of the chaperonin rings and the release of ADP and the folded substrate protein. The sequence is that of 60 kDa heat shock protein, mitochondrial (Hspd1) from Rattus norvegicus (Rat).